A 306-amino-acid polypeptide reads, in one-letter code: D-alanine--D-alanine ligase (306 aa).

One can recognise an ATP-grasp domain in the interval 104-303 (KMLWKAFGLP…FEQLVVKILE (200 aa)). 134–189 (VAKLGLPLMVKPSLEGSSVGLTKVKAVEELKSAVEYALKFDNTILIEEWLAGDELT) contributes to the ATP binding site. Residues aspartate 257, glutamate 270, and asparagine 272 each contribute to the Mg(2+) site.

This sequence belongs to the D-alanine--D-alanine ligase family. It depends on Mg(2+) as a cofactor. Mn(2+) is required as a cofactor.

The protein resides in the cytoplasm. It carries out the reaction 2 D-alanine + ATP = D-alanyl-D-alanine + ADP + phosphate + H(+). The protein operates within cell wall biogenesis; peptidoglycan biosynthesis. Its function is as follows. Cell wall formation. The polypeptide is D-alanine--D-alanine ligase (Haemophilus influenzae (strain PittGG)).